The following is a 447-amino-acid chain: N-succinylarginine dihydrolase (447 aa).

Substrate contacts are provided by residues 19–28 (AGLSFGNEAS), Asn-110, and 137–138 (HR). Glu-174 is a catalytic residue. Arg-212 is a binding site for substrate. The active site involves His-248. Asp-250 and Asn-359 together coordinate substrate. The active-site Nucleophile is the Cys-365.

This sequence belongs to the succinylarginine dihydrolase family. In terms of assembly, homodimer.

The enzyme catalyses N(2)-succinyl-L-arginine + 2 H2O + 2 H(+) = N(2)-succinyl-L-ornithine + 2 NH4(+) + CO2. Its pathway is amino-acid degradation; L-arginine degradation via AST pathway; L-glutamate and succinate from L-arginine: step 2/5. In terms of biological role, catalyzes the hydrolysis of N(2)-succinylarginine into N(2)-succinylornithine, ammonia and CO(2). The polypeptide is N-succinylarginine dihydrolase (Escherichia coli O6:K15:H31 (strain 536 / UPEC)).